A 561-amino-acid chain; its full sequence is Phosphatidylinositol 4-kinase gamma 1 (561 aa).

In terms of domain architecture, PI3K/PI4K catalytic spans 121–416; that stretch reads GAQPLLLPSG…SVFGKTSEDS (296 aa). The tract at residues 127-133 is G-loop; sequence LPSGMGG. ATP-binding positions include 128–134, Lys149, and 233–236; these read PSGMGGA and QRFV. Residues 266 to 274 are catalytic loop; sequence LNLDRHAGN. Positions 296 to 322 are activation loop; that stretch reads PIDHGLCLPECLDDPYFEWLNWPQALV. Asp298 contributes to the ATP binding site. Residues 456-520 form a disordered region; sequence PPLVPRGPRA…PISPNHDESK (65 aa). The segment covering 467–484 has biased composition (polar residues); that stretch reads TIPNDVTASMSSSQNQRI.

The protein belongs to the PI3/PI4-kinase family. Type II PI4K subfamily.

It carries out the reaction a 1,2-diacyl-sn-glycero-3-phospho-(1D-myo-inositol) + ATP = a 1,2-diacyl-sn-glycero-3-phospho-(1D-myo-inositol 4-phosphate) + ADP + H(+). The phosphorylation of phosphatidylinositol (PI) to PI4P is the first committed step in the generation of phosphatidylinositol 4,5-bisphosphate (PIP2), a precursor of the second messenger inositol 1,4,5-trisphosphate (InsP3). The protein is Phosphatidylinositol 4-kinase gamma 1 (PI4KG1) of Arabidopsis thaliana (Mouse-ear cress).